The following is a 192-amino-acid chain: Elongation factor P (192 aa).

This sequence belongs to the elongation factor P family.

The protein resides in the cytoplasm. Its pathway is protein biosynthesis; polypeptide chain elongation. Functionally, involved in peptide bond synthesis. Stimulates efficient translation and peptide-bond synthesis on native or reconstituted 70S ribosomes in vitro. Probably functions indirectly by altering the affinity of the ribosome for aminoacyl-tRNA, thus increasing their reactivity as acceptors for peptidyl transferase. The chain is Elongation factor P from Borrelia hermsii (strain HS1 / DAH).